A 124-amino-acid chain; its full sequence is UPF0738 protein ABC2521 (124 aa).

This sequence belongs to the UPF0738 family.

This is UPF0738 protein ABC2521 from Shouchella clausii (strain KSM-K16) (Alkalihalobacillus clausii).